Here is a 94-residue protein sequence, read N- to C-terminus: MKILAVVLISVIVLNTANGENYYPQKYTNDYYGCQQQTDAFCDKVCKLHLAESGFCDQSWGLAKACKCVNVSYDNSFYFNALESQCPLLNKSAA.

An N-terminal signal peptide occupies residues Met1 to Gly19. Residues Glu20 to Pro87 enclose the LCN-type CS-alpha/beta domain. Cystine bridges form between Cys34/Cys56, Cys42/Cys66, and Cys46/Cys68.

Belongs to the long (3 C-C) scorpion toxin superfamily. As to quaternary structure, homodimer; disulfide-linked or monomer (edited version) or heterodimer of an alpha chain (AC P0CI44 or AC P0CI45) and this beta chain (non-edited version). As to expression, expressed by the venom gland.

It is found in the secreted. Functionally, the homodimer inhibits HMG-CoA reductase (HMGCR) (32% of inhibition produced by 0.6 uM), a glycoprotein involved in the control of cholesterol biosynthesis. The inhibitory effects of bumarsin are seen at much lower concentrations (0.6 uM) than that for statins such as atorvastatin (5 mM) and simvastatin (10 uM). In addition to inhibition of HMG-CoA reductase, this protein lowers cholesterol levels by inducing steroid hormone synthesis via StAR, and by increasing reverse cholesterol transport mediated by the induction of ABCA1 and APOA1. The heterodimer non-edited LVP1 induces lipolysis in rat adipocytes. Induction of lipolysis by LVP1 appears to be mediated through the beta-2 adrenergic receptor pathway (ADRB2). Its function is as follows. The monomer edited version, similar to alpha-toxins, may modulate voltage-gated sodium channels (Nav) and may block voltage-gated potassium channels (Kv). This chain is Lipolysis-activating peptide 1-beta chain, found in Lychas mucronatus (Chinese swimming scorpion).